The sequence spans 862 residues: Switch 2 (862 aa).

2 disordered regions span residues 13-43 and 58-95; these read PCGS…SSLS and KHES…DDER. The span at 16-27 shows a compositional bias: low complexity; sequence SFPSSSSLRVSS. Residues 58–84 show a composition bias toward basic and acidic residues; that stretch reads KHESKISKTQVEDFDHNEDDHKRNIKF. Acidic residues predominate over residues 85 to 95; the sequence is DEEEVDEDDER. The Helicase ATP-binding domain maps to 151 to 323; it reads YNLYKNNHGG…FNLFEWVAPG (173 aa). 164-171 contributes to the ATP binding site; sequence DDMGLGKT. The DEAH box signature appears at 274-277; the sequence is DEAH. The stretch at 274-294 forms a coiled coil; sequence DEAHRLKNEKSKLYEACLEIK. Residues 532–685 form the Helicase C-terminal domain; sequence ALEKLMASWI…VAGKMETRYF (154 aa). Residues 782–793 are compositionally biased toward polar residues; it reads TTSTSQRLNGDG. Residues 782–821 are disordered; it reads TTSTSQRLNGDGNSADRKKKKRKGCSEEEDMSSSNREQKR.

Belongs to the SNF2/RAD54 helicase family.

Functionally, may be involved in early DNA damage response. Probable chromatin remodeling factor. In Arabidopsis thaliana (Mouse-ear cress), this protein is Switch 2.